The chain runs to 315 residues: Acetyl-coenzyme A carboxylase carboxyl transferase subunit alpha (315 aa).

Residues 32–289 (EIDMLEASLE…KEAFTKQLSE (258 aa)) enclose the CoA carboxyltransferase C-terminal domain.

It belongs to the AccA family. Acetyl-CoA carboxylase is a heterohexamer composed of biotin carboxyl carrier protein (AccB), biotin carboxylase (AccC) and two subunits each of ACCase subunit alpha (AccA) and ACCase subunit beta (AccD).

The protein resides in the cytoplasm. The enzyme catalyses N(6)-carboxybiotinyl-L-lysyl-[protein] + acetyl-CoA = N(6)-biotinyl-L-lysyl-[protein] + malonyl-CoA. It functions in the pathway lipid metabolism; malonyl-CoA biosynthesis; malonyl-CoA from acetyl-CoA: step 1/1. Its function is as follows. Component of the acetyl coenzyme A carboxylase (ACC) complex. First, biotin carboxylase catalyzes the carboxylation of biotin on its carrier protein (BCCP) and then the CO(2) group is transferred by the carboxyltransferase to acetyl-CoA to form malonyl-CoA. This chain is Acetyl-coenzyme A carboxylase carboxyl transferase subunit alpha, found in Staphylococcus carnosus (strain TM300).